Consider the following 447-residue polypeptide: Methyl-coenzyme M reductase I subunit beta (447 aa).

Residue Tyr-371 coordinates coenzyme M. Gly-373 is a coenzyme B binding site.

The protein belongs to the methyl-coenzyme M reductase beta subunit family. As to quaternary structure, MCR is a hexamer of two alpha, two beta, and two gamma chains, forming a dimer of heterotrimers. The cofactor is coenzyme F430.

It is found in the cytoplasm. The enzyme catalyses coenzyme B + methyl-coenzyme M = methane + coenzyme M-coenzyme B heterodisulfide. It participates in one-carbon metabolism; methyl-coenzyme M reduction; methane from methyl-coenzyme M: step 1/1. Its function is as follows. Component of the methyl-coenzyme M reductase (MCR) I that catalyzes the reductive cleavage of methyl-coenzyme M (CoM-S-CH3 or 2-(methylthio)ethanesulfonate) using coenzyme B (CoB or 7-mercaptoheptanoylthreonine phosphate) as reductant which results in the production of methane and the mixed heterodisulfide of CoB and CoM (CoM-S-S-CoB). This is the final step in methanogenesis. The polypeptide is Methyl-coenzyme M reductase I subunit beta (mcrB) (Methanocaldococcus jannaschii (strain ATCC 43067 / DSM 2661 / JAL-1 / JCM 10045 / NBRC 100440) (Methanococcus jannaschii)).